A 311-amino-acid chain; its full sequence is MYPAPDMSLWQGRIDSQEGADARRWHQWMRPYADDAEAASVLLGFASDEGVRRNQGRQGARHGPPALRRALANLAWHGEQAIYDAGDIVAGDDLEAAQECYAQRVADLLARGHRVVGLGGGHEIAYASFAGLARHLSRHERLPRIGILNFDAHFDLRHAERASSGTPFRQIAELCQASDWPFAYCCLGISRLSNTAALFDQAQRLGVRYLLDRQLQPWNLERSEAFLDSFLQSVDHLYLTVCLDVLPAAQAPGVSAPSAHGVEMSVVEHLVRRAKASGKLRLADIAELNPQLDSDQRTARIAARLVDSLVN.

Positions 122, 151, 153, 155, 242, and 244 each coordinate Mn(2+).

The protein belongs to the arginase family. Mn(2+) is required as a cofactor.

The catalysed reaction is N-formimidoyl-L-glutamate + H2O = formamide + L-glutamate. The protein operates within amino-acid degradation; L-histidine degradation into L-glutamate; L-glutamate from N-formimidoyl-L-glutamate (hydrolase route): step 1/1. Its function is as follows. Catalyzes the conversion of N-formimidoyl-L-glutamate to L-glutamate and formamide. This chain is Formimidoylglutamase, found in Pseudomonas aeruginosa (strain UCBPP-PA14).